An 819-amino-acid polypeptide reads, in one-letter code: Lon protease (819 aa).

Over residues 1–14 (MNSTNNTDSQNLDP) the composition is skewed to polar residues. Residues 1–41 (MNSTNNTDSQNLDPNASEVEKLLDESAEAEEKTDDHTPPSE) are disordered. A compositionally biased stretch (basic and acidic residues) spans 18–38 (EVEKLLDESAEAEEKTDDHTP). The Lon N-terminal domain maps to 42–239 (LFILPLNKRP…KALVLLKKEL (198 aa)). 392 to 399 (GPPGVGKT) contacts ATP. The 185-residue stretch at 634–818 (KTPVGVATGL…DDVFKIAFPG (185 aa)) folds into the Lon proteolytic domain. Active-site residues include serine 724 and lysine 767.

Belongs to the peptidase S16 family. As to quaternary structure, homohexamer. Organized in a ring with a central cavity.

The protein localises to the cytoplasm. It carries out the reaction Hydrolysis of proteins in presence of ATP.. ATP-dependent serine protease that mediates the selective degradation of mutant and abnormal proteins as well as certain short-lived regulatory proteins. Required for cellular homeostasis and for survival from DNA damage and developmental changes induced by stress. Degrades polypeptides processively to yield small peptide fragments that are 5 to 10 amino acids long. Binds to DNA in a double-stranded, site-specific manner. This is Lon protease from Chlamydia muridarum (strain MoPn / Nigg).